The following is a 314-amino-acid chain: Homoserine O-succinyltransferase (314 aa).

Catalysis depends on C142, which acts as the Acyl-thioester intermediate. Residues K163 and S192 each contribute to the substrate site. The active-site Proton acceptor is the H235. E237 is an active-site residue. A substrate-binding site is contributed by R249.

This sequence belongs to the MetA family.

It is found in the cytoplasm. It carries out the reaction L-homoserine + succinyl-CoA = O-succinyl-L-homoserine + CoA. It functions in the pathway amino-acid biosynthesis; L-methionine biosynthesis via de novo pathway; O-succinyl-L-homoserine from L-homoserine: step 1/1. Transfers a succinyl group from succinyl-CoA to L-homoserine, forming succinyl-L-homoserine. This Shewanella woodyi (strain ATCC 51908 / MS32) protein is Homoserine O-succinyltransferase.